An 85-amino-acid chain; its full sequence is Translation initiation factor IF-1 1 (85 aa).

One can recognise an S1-like domain in the interval 1–72; it reads MSKEDLIEMQ…NKGRLTFRHI (72 aa).

The protein belongs to the IF-1 family. As to quaternary structure, component of the 30S ribosomal translation pre-initiation complex which assembles on the 30S ribosome in the order IF-2 and IF-3, IF-1 and N-formylmethionyl-tRNA(fMet); mRNA recruitment can occur at any time during PIC assembly.

Its subcellular location is the cytoplasm. One of the essential components for the initiation of protein synthesis. Stabilizes the binding of IF-2 and IF-3 on the 30S subunit to which N-formylmethionyl-tRNA(fMet) subsequently binds. Helps modulate mRNA selection, yielding the 30S pre-initiation complex (PIC). Upon addition of the 50S ribosomal subunit IF-1, IF-2 and IF-3 are released leaving the mature 70S translation initiation complex. This Paracidovorax citrulli (strain AAC00-1) (Acidovorax citrulli) protein is Translation initiation factor IF-1 1.